The primary structure comprises 432 residues: MHAFTTQNPNRMAPTVILEPAGGCLCDQPVHIAVRGLAPEQPVTLRSVLRDEKGALFRAHARYRADSHGELDLARTPALGGSFSGLEPMGLLWAMEPDRPFWRLIKRDVQTPFVVELEVLDGHEPDGGQRLARAVHERHFMAPGVRRVPVREGRVRATLFLPPGTGPFPGIIDLFGIGSGLLEYRASLLAGKGFAVMALAYNNYEDLPKDMDIIHLEYFEEAVTYLLSHPQVTGSGVGVLGISKGGELGFAMASFLKNITAAVIINGSISNIGGNLQYKDETVPSVGINTKRVKRTKDGLKDIVDLLNNPLEGPDQKSLIPVERSDTAFLFLVGQDDHNWKSEFYAREASKRLQAHGKEKPQIICYPETGHHIEPPYFPLCKASLNSLVGGPVIWGGEPRAHAMAQVDAWQQLQTFFHNHLDGKKKTIPAKL.

Catalysis depends on charge relay system residues Ser-243, Asp-337, and His-371. Positions Ala-430–Leu-432 match the Microbody targeting signal motif.

Belongs to the C/M/P thioester hydrolase family. As to expression, widely expressed. Highly expressed in the kidney, expressed at low level in the liver. Isoform 2 is expressed in the kidney, but not in the liver. Isoform 1 is liver-specific. Highly expressed in kidney (at protein level).

It localises to the peroxisome. It catalyses the reaction hexadecanoyl-CoA + H2O = hexadecanoate + CoA + H(+). The enzyme catalyses decanoyl-CoA + H2O = decanoate + CoA + H(+). It carries out the reaction dodecanoyl-CoA + H2O = dodecanoate + CoA + H(+). The catalysed reaction is tetradecanoyl-CoA + H2O = tetradecanoate + CoA + H(+). It catalyses the reaction octadecanoyl-CoA + H2O = octadecanoate + CoA + H(+). The enzyme catalyses eicosanoyl-CoA + H2O = eicosanoate + CoA + H(+). It carries out the reaction (9Z)-octadecenoyl-CoA + H2O = (9Z)-octadecenoate + CoA + H(+). The catalysed reaction is (9Z,12Z)-octadecadienoyl-CoA + H2O = (9Z,12Z)-octadecadienoate + CoA + H(+). It catalyses the reaction (5Z,8Z,11Z,14Z)-eicosatetraenoyl-CoA + H2O = (5Z,8Z,11Z,14Z)-eicosatetraenoate + CoA + H(+). The enzyme catalyses tetracosanoyl-CoA + H2O = tetracosanoate + CoA + H(+). It carries out the reaction hexacosanoyl-CoA + H2O = hexacosanoate + CoA + H(+). The catalysed reaction is docosanoyl-CoA + H2O = docosanoate + CoA + H(+). It catalyses the reaction (9Z)-hexadecenoyl-CoA + H2O = (9Z)-hexadecenoate + CoA + H(+). It functions in the pathway lipid metabolism; fatty acid metabolism. Functionally, catalyzes the hydrolysis of acyl-CoAs into free fatty acids and coenzyme A (CoASH), regulating their respective intracellular levels. Mainly active on long-chain acyl-CoAs. May have a function in termination of beta-oxidation of fatty acids. The chain is Acyl-coenzyme A thioesterase 3 (Acot3) from Mus musculus (Mouse).